The following is a 185-amino-acid chain: Ribosome-recycling factor (185 aa).

Positions 142–165 are disordered; the sequence is IVKDGDAGEDEGSRAEKELDGLTK.

This sequence belongs to the RRF family.

It is found in the cytoplasm. Functionally, responsible for the release of ribosomes from messenger RNA at the termination of protein biosynthesis. May increase the efficiency of translation by recycling ribosomes from one round of translation to another. This Renibacterium salmoninarum (strain ATCC 33209 / DSM 20767 / JCM 11484 / NBRC 15589 / NCIMB 2235) protein is Ribosome-recycling factor.